Reading from the N-terminus, the 286-residue chain is Apoptosis inhibitor 1 (286 aa).

2 BIR repeats span residues 29-96 (LIER…CAYA) and 131-199 (LQSR…CYFV). Positions 169, 172, 189, and 196 each coordinate Zn(2+). An RING-type zinc finger spans residues 238-274 (CKVCLERQRDAVLMPCRHFCVCVQCYFGLDQKCPTCR).

Its function is as follows. Acts by blocking cellular apoptosis early in infection. Later, stimulates caspase-3-like protease activity and induces apoptosis, probably to favor the release of occluded virions. In Lepidoptera (butterflies and moths), this protein is Apoptosis inhibitor 1 (IAP1).